A 303-amino-acid chain; its full sequence is Probable 5-dehydro-4-deoxyglucarate dehydratase (303 aa).

It belongs to the DapA family.

It carries out the reaction 5-dehydro-4-deoxy-D-glucarate + H(+) = 2,5-dioxopentanoate + CO2 + H2O. It participates in carbohydrate acid metabolism; D-glucarate degradation; 2,5-dioxopentanoate from D-glucarate: step 2/2. The sequence is that of Probable 5-dehydro-4-deoxyglucarate dehydratase from Pseudomonas savastanoi pv. phaseolicola (strain 1448A / Race 6) (Pseudomonas syringae pv. phaseolicola (strain 1448A / Race 6)).